Consider the following 805-residue polypeptide: Arginine/serine-rich protein PNISR (805 aa).

Positions 75 to 88 (NNHGNFQGDSNFNR) are enriched in polar residues. Disordered stretches follow at residues 75–331 (NNHG…EEKE) and 382–805 (LTGL…SRSR). 2 stretches are compositionally biased toward pro residues: residues 100-115 (PPHP…PAPG) and 183-194 (YWQPGPPGPPAP). Residues 197–210 (NRRERPPSFRDRQR) show a composition bias toward basic and acidic residues. S204 and S211 each carry phosphoserine. Residue K218 forms a Glycyl lysine isopeptide (Lys-Gly) (interchain with G-Cter in SUMO2) linkage. Residues 237–276 (REGLEKMEREKQKKLEKERMEQQRSQLSKKEKKATEDAEG) are a coiled coil. Residues 238–258 (EGLEKMEREKQKKLEKERMEQ) show a composition bias toward basic and acidic residues. S290, S304, S313, and S321 each carry phosphoserine. The span at 290 to 299 (SDEEDEDAEN) shows a compositional bias: acidic residues. Residues 384 to 393 (GLGGLGGYGS) show a composition bias toward gly residues. A compositionally biased stretch (basic and acidic residues) spans 421-463 (QKQEAFWRKEKEQQLLQDKQIEEEKQQTERVTKEMNEFIHREQ). The stretch at 427–461 (WRKEKEQQLLQDKQIEEEKQQTERVTKEMNEFIHR) forms a coiled coil. S465 and S467 each carry phosphoserine. 2 stretches are compositionally biased toward basic and acidic residues: residues 473–486 (EADR…KRTP) and 494–508 (EPKR…ERGS). T485 carries the phosphothreonine modification. K496 participates in a covalent cross-link: Glycyl lysine isopeptide (Lys-Gly) (interchain with G-Cter in SUMO2). A compositionally biased stretch (low complexity) spans 509 to 550 (RSGSSSSGSSSSGSRTSSSSSSVSSSSYSSSSGSSCTSSRSS). 4 stretches are compositionally biased toward basic residues: residues 551–560 (SPKRRKRPSR), 567–579 (KARR…YSRR), 587–598 (TRGKLRDRRRSN), and 607–639 (RRNR…SRDR). A compositionally biased stretch (basic and acidic residues) spans 659 to 721 (EAKEQDRKKE…KRKRESERTF (63 aa)). K703 is covalently cross-linked (Glycyl lysine isopeptide (Lys-Gly) (interchain with G-Cter in SUMO2)). S726 is modified (phosphoserine). Basic and acidic residues predominate over residues 732–753 (IRHDSRQDSKKNATKDSKRHSG). The segment covering 754–767 (SDSSGRSSSESPGS) has biased composition (low complexity). Composition is skewed to basic residues over residues 771-781 (KKAKKPKHSRS) and 789-805 (RSGK…SRSR).

It belongs to the splicing factor SR family. In terms of assembly, interacts with PNN.

It localises to the nucleus speckle. The chain is Arginine/serine-rich protein PNISR (Pnisr) from Mus musculus (Mouse).